A 569-amino-acid chain; its full sequence is Carboxylesterase 3 (569 aa).

The N-terminal stretch at 1 to 24 (MRLHRLRARLNAVAFGLLLLLVHG) is a signal peptide. Cysteine 95 and cysteine 122 are oxidised to a cystine. The N-linked (GlcNAc...) asparagine glycan is linked to asparagine 103. Serine 227 (acyl-ester intermediate) is an active-site residue. Cysteine 279 and cysteine 290 form a disulfide bridge. Catalysis depends on charge relay system residues glutamate 345 and histidine 458. The Prevents secretion from ER signature appears at 566-569 (QEDL).

It belongs to the type-B carboxylesterase/lipase family. N-glycosylated.

It localises to the endoplasmic reticulum lumen. It catalyses the reaction a carboxylic ester + H2O = an alcohol + a carboxylate + H(+). Involved in the detoxification of xenobiotics and in the activation of ester and amide prodrugs. The protein is Carboxylesterase 3 (CES3) of Pongo abelii (Sumatran orangutan).